A 101-amino-acid chain; its full sequence is Small ribosomal subunit protein uS14 (101 aa).

The protein belongs to the universal ribosomal protein uS14 family. Part of the 30S ribosomal subunit. Contacts proteins S3 and S10.

Binds 16S rRNA, required for the assembly of 30S particles and may also be responsible for determining the conformation of the 16S rRNA at the A site. This chain is Small ribosomal subunit protein uS14, found in Paracoccus denitrificans (strain Pd 1222).